A 145-amino-acid polypeptide reads, in one-letter code: Large ribosomal subunit protein uL11 (145 aa).

The protein belongs to the universal ribosomal protein uL11 family. As to quaternary structure, part of the ribosomal stalk of the 50S ribosomal subunit. Interacts with L10 and the large rRNA to form the base of the stalk. L10 forms an elongated spine to which L12 dimers bind in a sequential fashion forming a multimeric L10(L12)X complex. Post-translationally, one or more lysine residues are methylated.

Forms part of the ribosomal stalk which helps the ribosome interact with GTP-bound translation factors. The protein is Large ribosomal subunit protein uL11 of Corynebacterium glutamicum (strain ATCC 13032 / DSM 20300 / JCM 1318 / BCRC 11384 / CCUG 27702 / LMG 3730 / NBRC 12168 / NCIMB 10025 / NRRL B-2784 / 534).